A 188-amino-acid polypeptide reads, in one-letter code: Peptide methionine sulfoxide reductase MsrA (188 aa).

The disordered stretch occupies residues 1 to 25 (MEGNEKAEQKNATSEESTDIFENPG). The active site involves cysteine 37.

Belongs to the MsrA Met sulfoxide reductase family.

It carries out the reaction L-methionyl-[protein] + [thioredoxin]-disulfide + H2O = L-methionyl-(S)-S-oxide-[protein] + [thioredoxin]-dithiol. It catalyses the reaction [thioredoxin]-disulfide + L-methionine + H2O = L-methionine (S)-S-oxide + [thioredoxin]-dithiol. In terms of biological role, has an important function as a repair enzyme for proteins that have been inactivated by oxidation. Catalyzes the reversible oxidation-reduction of methionine sulfoxide in proteins to methionine. This is Peptide methionine sulfoxide reductase MsrA from Methanosarcina acetivorans (strain ATCC 35395 / DSM 2834 / JCM 12185 / C2A).